Here is a 260-residue protein sequence, read N- to C-terminus: DNA repair protein RecO (260 aa).

Belongs to the RecO family.

Its function is as follows. Involved in DNA repair and RecF pathway recombination. The chain is DNA repair protein RecO from Streptococcus gordonii (strain Challis / ATCC 35105 / BCRC 15272 / CH1 / DL1 / V288).